A 549-amino-acid chain; its full sequence is Glucose-6-phosphate isomerase (549 aa).

Catalysis depends on Glu-355, which acts as the Proton donor. Residues His-386 and Lys-514 contribute to the active site.

It belongs to the GPI family.

It is found in the cytoplasm. It carries out the reaction alpha-D-glucose 6-phosphate = beta-D-fructose 6-phosphate. Its pathway is carbohydrate biosynthesis; gluconeogenesis. The protein operates within carbohydrate degradation; glycolysis; D-glyceraldehyde 3-phosphate and glycerone phosphate from D-glucose: step 2/4. Catalyzes the reversible isomerization of glucose-6-phosphate to fructose-6-phosphate. This chain is Glucose-6-phosphate isomerase, found in Salmonella agona (strain SL483).